The sequence spans 637 residues: Coiled-coil domain-containing protein 22 homolog (637 aa).

Coiled coils occupy residues 322-489 (ETEI…YKQA) and 608-637 (SDRV…ETKN).

This sequence belongs to the CCDC22 family.

This chain is Coiled-coil domain-containing protein 22 homolog, found in Dictyostelium discoideum (Social amoeba).